A 303-amino-acid chain; its full sequence is Protein SULFUR DEFICIENCY-INDUCED 2 (303 aa).

The stretch at 62 to 89 (RVDSALKDMALLMKQQNRAEEAIDAIQS) forms a coiled coil. TPR repeat units follow at residues 64 to 97 (DSAL…CSRQ), 100 to 133 (ESLD…IYQG), 160 to 193 (SRIL…EPDA), and 195 to 226 (KACN…ENKE). A coiled-coil region spans residues 232–253 (RLMARVQELLSELKPQEEEAAA).

The protein belongs to the MS5 protein family.

The protein localises to the nucleus. Involved in the utilization of stored sulfate under sulfur-deficient conditions. This Arabidopsis thaliana (Mouse-ear cress) protein is Protein SULFUR DEFICIENCY-INDUCED 2.